The following is a 177-amino-acid chain: ATP synthase subunit delta (177 aa).

Belongs to the ATPase delta chain family. In terms of assembly, F-type ATPases have 2 components, F(1) - the catalytic core - and F(0) - the membrane proton channel. F(1) has five subunits: alpha(3), beta(3), gamma(1), delta(1), epsilon(1). F(0) has three main subunits: a(1), b(2) and c(10-14). The alpha and beta chains form an alternating ring which encloses part of the gamma chain. F(1) is attached to F(0) by a central stalk formed by the gamma and epsilon chains, while a peripheral stalk is formed by the delta and b chains.

Its subcellular location is the cell inner membrane. Its function is as follows. F(1)F(0) ATP synthase produces ATP from ADP in the presence of a proton or sodium gradient. F-type ATPases consist of two structural domains, F(1) containing the extramembraneous catalytic core and F(0) containing the membrane proton channel, linked together by a central stalk and a peripheral stalk. During catalysis, ATP synthesis in the catalytic domain of F(1) is coupled via a rotary mechanism of the central stalk subunits to proton translocation. In terms of biological role, this protein is part of the stalk that links CF(0) to CF(1). It either transmits conformational changes from CF(0) to CF(1) or is implicated in proton conduction. In Flavobacterium psychrophilum (strain ATCC 49511 / DSM 21280 / CIP 103535 / JIP02/86), this protein is ATP synthase subunit delta.